We begin with the raw amino-acid sequence, 427 residues long: Proteinase-activated receptor 1 (427 aa).

The N-terminal stretch at 1 to 21 (MGPRWLLLWAAGLGLCSPLVS) is a signal peptide. Positions 22–41 (ARTRGPRPGTDPTNGTLGPR) are cleaved as a propeptide — removed for receptor activation. The interval 23–87 (RTRGPRPGTD…RSSPPQKSPP (65 aa)) is disordered. Residue N35 is glycosylated (N-linked (GlcNAc...) asparagine). Residues 42-104 (SFFLRNSNDG…SGYLTSAWLT (63 aa)) lie on the Extracellular side of the membrane. Residues 58 to 68 (PEDEDSSEGEF) are compositionally biased toward acidic residues. N77 is a glycosylation site (N-linked (GlcNAc...) asparagine). Residues 105 to 130 (VFIPSVYTGVFLVSLPLNIMAVVVFV) form a helical membrane-spanning segment. At 131–139 (LKMKVKKPA) the chain is on the cytoplasmic side. A helical transmembrane segment spans residues 140–159 (VVYMLHLAAADVLFVCVLPF). Topologically, residues 160 to 178 (KISYYFSGSDWRFGSAMCR) are extracellular. A disulfide bridge links C177 with C256. The helical transmembrane segment at 179-200 (FVTAAFYGNMYASIMLMTAISV) threads the bilayer. At 201–220 (DRFLAVVYPIQSLSWRTLGR) the chain is on the cytoplasmic side. The helical transmembrane segment at 221 to 241 (ASFICLAIWAMAIAGVAPLLL) threads the bilayer. Residues 242 to 270 (QEQATQVPGLNITACHDVLNQTLLEGYYS) are Extracellular-facing. Residues N252 and N261 are each glycosylated (N-linked (GlcNAc...) asparagine). A helical membrane pass occupies residues 271–290 (YYFSAFSAVFFFVPLTLSTV). The Cytoplasmic portion of the chain corresponds to 291–313 (SYVSIIRCLSSSTVANQNKKSRA). A helical membrane pass occupies residues 314–336 (LLLSAAVFCIFILCFGPTNILLL). Residues 337 to 351 (LHYAFLSSDPMTEAA) are Extracellular-facing. Residues 352 to 376 (YFAYLLCVCVSSISCCIDPLIYYYA) traverse the membrane as a helical segment. Topologically, residues 377-427 (SSECQRHLFAILHCKESSDPGSCNSSGQLMPSKMDTCSSNLSSSLYKKLLT) are cytoplasmic. At S420 the chain carries Phosphoserine.

It belongs to the G-protein coupled receptor 1 family. Post-translationally, proteolytic cleavage by thrombin generates a new N-terminus that functions as a tethered ligand. Also proteolytically cleaved by cathepsin CTSG. Phosphorylated in the C-terminal tail; probably mediating desensitization prior to the uncoupling and internalization of the receptor.

The protein localises to the cell membrane. High affinity receptor that binds the activated thrombin, leading to calcium release from intracellular stores. The thrombin-activated receptor signaling pathway is mediated through PTX-insensitive G proteins, activation of phospholipase C resulting in the production of 1D-myo-inositol 1,4,5-trisphosphate (InsP3) which binds to InsP3 receptors causing calcium release from the stores. In astrocytes, the calcium released into the cytosol allows the Ca(2+)-dependent release of L-glutamate into the synaptic cleft through BEST1, that targets the neuronal postsynaptic GRIN2A/NMDAR receptor resulting in the synaptic plasticity regulation. May play a role in platelets activation and in vascular development. Mediates up-regulation of pro-inflammatory cytokines, such as MCP-1/CCL2 and IL6, triggered by coagulation factor Xa (F10) in cardiac fibroblasts and umbilical vein endothelial cells. This chain is Proteinase-activated receptor 1, found in Bos taurus (Bovine).